A 278-amino-acid polypeptide reads, in one-letter code: Undecaprenyl-diphosphatase 3 (278 aa).

6 helical membrane passes run 42–62 (DITA…LLYF), 88–108 (YRFG…GVAF), 119–139 (LWFV…ADHV), 187–207 (VAVT…AAAL), 224–244 (ATII…AWLL), and 254–274 (VFIG…ATGI).

Belongs to the UppP family.

The protein localises to the cell membrane. The catalysed reaction is di-trans,octa-cis-undecaprenyl diphosphate + H2O = di-trans,octa-cis-undecaprenyl phosphate + phosphate + H(+). Its function is as follows. Catalyzes the dephosphorylation of undecaprenyl diphosphate (UPP). Confers resistance to bacitracin. This Frankia casuarinae (strain DSM 45818 / CECT 9043 / HFP020203 / CcI3) protein is Undecaprenyl-diphosphatase 3.